Consider the following 434-residue polypeptide: Beta-enolase (434 aa).

Alanine 2 is modified (N-acetylalanine). Position 72 is a phosphothreonine (threonine 72). A phosphoserine mark is found at serine 83 and serine 157. Substrate is bound by residues histidine 158 and glutamate 167. The residue at position 176 (serine 176) is a Phosphoserine. Phosphothreonine is present on threonine 205. Glutamate 210 serves as the catalytic Proton donor. Threonine 229 is modified (phosphothreonine). Tyrosine 236 carries the phosphotyrosine modification. Aspartate 245 is a binding site for Mg(2+). Serine 263 carries the phosphoserine modification. Positions 293 and 318 each coordinate substrate. Mg(2+)-binding residues include glutamate 293 and aspartate 318. The active-site Proton acceptor is the lysine 343. Substrate-binding positions include 370–373 (SHRS) and lysine 394.

It belongs to the enolase family. In terms of assembly, mammalian enolase is composed of 3 isozyme subunits, alpha, beta and gamma, which can form homodimers or heterodimers which are cell-type and development-specific. Interacts with PNKD. The cofactor is Mg(2+).

It is found in the cytoplasm. The enzyme catalyses (2R)-2-phosphoglycerate = phosphoenolpyruvate + H2O. Its pathway is carbohydrate degradation; glycolysis; pyruvate from D-glyceraldehyde 3-phosphate: step 4/5. Functionally, glycolytic enzyme that catalyzes the conversion of 2-phosphoglycerate to phosphoenolpyruvate. Appears to have a function in striated muscle development and regeneration. In Sus scrofa (Pig), this protein is Beta-enolase (ENO3).